The sequence spans 218 residues: MTSLSREALLVRAALEAEGLETPLVANALDGQQKREKIEGHMRAIMETLGLDLADDSLAETPHRIAKMYVNEIFSGLDYATFPKVTVIENKMKVDEMIMVRDISLTSTCEHHFVTIDGLAHVAYIPRGKVIGLSKINRIVQFFARRPQVQERLTQQILLALQTLLGTKDVAISIKATHFCVKARGVMDSTSYTTTTSLGGVFKTQPDTRAEFLAGLKR.

Residues Cys-109, His-112, and Cys-180 each contribute to the Zn(2+) site.

It belongs to the GTP cyclohydrolase I family. Toroid-shaped homodecamer, composed of two pentamers of five dimers.

It carries out the reaction GTP + H2O = 7,8-dihydroneopterin 3'-triphosphate + formate + H(+). It functions in the pathway cofactor biosynthesis; 7,8-dihydroneopterin triphosphate biosynthesis; 7,8-dihydroneopterin triphosphate from GTP: step 1/1. This Aeromonas hydrophila subsp. hydrophila (strain ATCC 7966 / DSM 30187 / BCRC 13018 / CCUG 14551 / JCM 1027 / KCTC 2358 / NCIMB 9240 / NCTC 8049) protein is GTP cyclohydrolase 1.